The chain runs to 268 residues: Homeobox protein Hox-C4a (268 aa).

The tract at residues 70 to 129 (PEPDTQRGHGLPHAGHLLGKGQSASCEPPPLPLSPATPSAASSACNQATPEHPNSSASAK) is disordered. 2 stretches are compositionally biased toward low complexity: residues 77-95 (GHGL…SASC) and 105-114 (ATPSAASSAC). The span at 115–128 (NQATPEHPNSSASA) shows a compositional bias: polar residues. Positions 133-138 (VYPWMK) match the Antp-type hexapeptide motif. The homeobox DNA-binding region spans 154 to 213 (PKRSRTAYTRQQVLELEKEFHYNRYLTRRRRIEIAHSLVLSERQIKIWFQNRRMKWKKDH). The tract at residues 212–268 (DHRLPNTKVRSSSSTGISSGSNTSSAAGVVAAASTTNTMSASEDLSGTERGEDITRL) is disordered. Low complexity predominate over residues 222-253 (SSSSTGISSGSNTSSAAGVVAAASTTNTMSAS). Basic and acidic residues predominate over residues 258 to 268 (GTERGEDITRL).

This sequence belongs to the Antp homeobox family. Deformed subfamily.

Its subcellular location is the nucleus. In terms of biological role, sequence-specific transcription factor which is part of a developmental regulatory system that provides cells with specific positional identities on the anterior-posterior axis. The protein is Homeobox protein Hox-C4a (hoxc4a) of Danio rerio (Zebrafish).